The sequence spans 234 residues: uncharacterized protein (234 aa).

A helical transmembrane segment spans residues 13–32 (KSINYYIFFFQYTLVYNTIQ). Disordered regions lie at residues 102-130 (HSKT…SSNS) and 159-185 (ESDS…SEYE). A compositionally biased stretch (low complexity) spans 103–130 (SKTTSLPFSSSSPQSSSSSSSSSSSSNS). Over residues 167–185 (EFDSESNSDFDSESESEYE) the composition is skewed to acidic residues.

The protein resides in the membrane. This is an uncharacterized protein from Dictyostelium discoideum (Social amoeba).